The sequence spans 55 residues: Large ribosomal subunit protein bL33A (55 aa).

The protein belongs to the bacterial ribosomal protein bL33 family.

This chain is Large ribosomal subunit protein bL33A, found in Mycolicibacterium vanbaalenii (strain DSM 7251 / JCM 13017 / BCRC 16820 / KCTC 9966 / NRRL B-24157 / PYR-1) (Mycobacterium vanbaalenii).